A 381-amino-acid polypeptide reads, in one-letter code: uncharacterized protein (381 aa).

The next 9 membrane-spanning stretches (helical) occupy residues 59-79 (LITL…LYYM), 84-104 (GVAP…YQTM), 147-167 (VGVN…FFMA), 190-210 (SMMA…FNTI), 222-242 (LVLL…TFSI), 250-270 (ILTN…SIYW), 284-304 (HYFM…LILA), 311-331 (LSPI…IYKF), and 344-364 (VYFF…VTSL).

It belongs to the CDP-alcohol phosphatidyltransferase class-I family.

The protein resides in the membrane. This is an uncharacterized protein from Dictyostelium discoideum (Social amoeba).